The primary structure comprises 333 residues: Ribosomal RNA large subunit methyltransferase F (333 aa).

The segment covering M1–K10 has biased composition (basic residues). The tract at residues M1 to H31 is disordered. Low complexity predominate over residues A12–K22.

This sequence belongs to the methyltransferase superfamily. METTL16/RlmF family.

Its subcellular location is the cytoplasm. The catalysed reaction is adenosine(1618) in 23S rRNA + S-adenosyl-L-methionine = N(6)-methyladenosine(1618) in 23S rRNA + S-adenosyl-L-homocysteine + H(+). In terms of biological role, specifically methylates the adenine in position 1618 of 23S rRNA. In Ectopseudomonas mendocina (strain ymp) (Pseudomonas mendocina), this protein is Ribosomal RNA large subunit methyltransferase F.